The chain runs to 377 residues: Spermidine/putrescine import ATP-binding protein PotA (377 aa).

The ABC transporter domain maps to 22–252; it reads VRLQNVTKRF…PANRFVADFI (231 aa). 54-61 serves as a coordination point for ATP; it reads GPSGCGKT.

This sequence belongs to the ABC transporter superfamily. Spermidine/putrescine importer (TC 3.A.1.11.1) family. In terms of assembly, the complex is composed of two ATP-binding proteins (PotA), two transmembrane proteins (PotB and PotC) and a solute-binding protein (PotD).

The protein resides in the cell membrane. The enzyme catalyses ATP + H2O + polyamine-[polyamine-binding protein]Side 1 = ADP + phosphate + polyamineSide 2 + [polyamine-binding protein]Side 1.. Functionally, part of the ABC transporter complex PotABCD involved in spermidine/putrescine import. Responsible for energy coupling to the transport system. This Rubrobacter xylanophilus (strain DSM 9941 / JCM 11954 / NBRC 16129 / PRD-1) protein is Spermidine/putrescine import ATP-binding protein PotA.